Consider the following 300-residue polypeptide: DDRGK domain-containing protein 1 (300 aa).

At 1–2 (MD) the chain is on the lumenal side. The helical transmembrane segment at 3-23 (VVLYIAAAAILLVLIVFSVKI) threads the bilayer. At 24–300 (RGRTQDADVE…NLTPDIHSSA (277 aa)) the chain is on the cytoplasmic side. The tract at residues 28–173 (QDADVEDHQN…RVKEEQERRE (146 aa)) is disordered. Acidic residues predominate over residues 78–90 (NEDSPVEADEDEE). Positions 112–173 (KLEEKQARKA…RVKEEQERRE (62 aa)) are enriched in basic and acidic residues. The UFM1-interacting motif (UFIM) signature appears at 183–197 (SFIIEDQGEAEELTE). A PCI domain is found at 217–261 (VLLEDLASQFGLRTQDAIARLQDLIADGSLTGVIDDRGKFIFITP).

Belongs to the DDRGK1 family. Component of the UFM1 ribosome E3 ligase (UREL) complex, composed of ufl1, ddrgk1 and cdk5rap3.

It is found in the endoplasmic reticulum membrane. Functionally, component of the UFM1 ribosome E3 ligase (UREL) complex, a multiprotein complex that catalyzes ufmylation of endoplasmic reticulum-docked proteins. The UREL complex plays a key role in ribosome recycling by mediating mono-ufmylation of the RPL26/uL24 subunit of the 60S ribosome following ribosome dissociation: ufmylation weakens the junction between post-termination 60S subunits and SEC61 translocons, promoting release and recycling of the large ribosomal subunit from the endoplasmic reticulum membrane. Ufmylation of RPL26/uL24 and subsequent 60S ribosome recycling either take place after normal termination of translation or after ribosome stalling during cotranslational translocation at the endoplasmic reticulum. Within the UREL complex, DDRGK1 tethers the complex to the endoplasmic reticulum membrane to restrict its activity to endoplasmic reticulum-docked ribosomes and acts as an ufmylation 'reader': following RPL26/uL24 ufmylation, DDRGK1 specifically binds to ufmylated RPL26/uL24 via its UFIM motif, resulting in stable association between the 60S ribosome and the UREL complex, followed by dissociation of the 60S ribosome subunit from the endoplasmic reticulum membrane. The UREL complex is also involved in reticulophagy in response to endoplasmic reticulum stress by promoting ufmylation of proteins such as CYB5R3 and RPN1, thereby promoting lysosomal degradation of ufmylated proteins. Plays a role in cartilage development through sox9, inhibiting the ubiquitin-mediated proteasomal degradation of this transcriptional regulator. Required for stabilization and ufmylation of ATG9A. In Danio rerio (Zebrafish), this protein is DDRGK domain-containing protein 1.